An 88-amino-acid polypeptide reads, in one-letter code: Small ribosomal subunit protein uS17 (88 aa).

This sequence belongs to the universal ribosomal protein uS17 family. Part of the 30S ribosomal subunit.

In terms of biological role, one of the primary rRNA binding proteins, it binds specifically to the 5'-end of 16S ribosomal RNA. In Vesicomyosocius okutanii subsp. Calyptogena okutanii (strain HA), this protein is Small ribosomal subunit protein uS17.